A 259-amino-acid polypeptide reads, in one-letter code: Acyl-[acyl-carrier-protein]--UDP-N-acetylglucosamine O-acyltransferase (259 aa).

It belongs to the transferase hexapeptide repeat family. LpxA subfamily. In terms of assembly, homotrimer.

It localises to the cytoplasm. The catalysed reaction is a (3R)-hydroxyacyl-[ACP] + UDP-N-acetyl-alpha-D-glucosamine = a UDP-3-O-[(3R)-3-hydroxyacyl]-N-acetyl-alpha-D-glucosamine + holo-[ACP]. The protein operates within glycolipid biosynthesis; lipid IV(A) biosynthesis; lipid IV(A) from (3R)-3-hydroxytetradecanoyl-[acyl-carrier-protein] and UDP-N-acetyl-alpha-D-glucosamine: step 1/6. In terms of biological role, involved in the biosynthesis of lipid A, a phosphorylated glycolipid that anchors the lipopolysaccharide to the outer membrane of the cell. This is Acyl-[acyl-carrier-protein]--UDP-N-acetylglucosamine O-acyltransferase from Psychrobacter sp. (strain PRwf-1).